A 37-amino-acid chain; its full sequence is MPSWHGMVLLPYVKHTHASTHTHTHNIYGCACELVFH.

Functionally, regulatory peptide encoded by the primary transcript (pri-miR164a) of the microRNA miR164a that enhances the accumulation of its corresponding mature miRNA. Acts probably as a transcriptional activator of its corresponding pri-miRNA. This chain is Peptide encoded by miPEP164a, found in Arabidopsis thaliana (Mouse-ear cress).